Consider the following 437-residue polypeptide: tRNA-2-methylthio-N(6)-dimethylallyladenosine synthase (437 aa).

Residues 5–121 (KKLYIKTYGC…LPELTARAAT (117 aa)) enclose the MTTase N-terminal domain. 6 residues coordinate [4Fe-4S] cluster: C14, C50, C84, C159, C163, and C166. The Radical SAM core domain maps to 145–371 (AKRGPTAFLT…QALLTRQQRA (227 aa)). The region spanning 374–436 (DAKVGTTARV…ANSLRGVLIA (63 aa)) is the TRAM domain.

This sequence belongs to the methylthiotransferase family. MiaB subfamily. Monomer. [4Fe-4S] cluster serves as cofactor.

The protein localises to the cytoplasm. It carries out the reaction N(6)-dimethylallyladenosine(37) in tRNA + (sulfur carrier)-SH + AH2 + 2 S-adenosyl-L-methionine = 2-methylsulfanyl-N(6)-dimethylallyladenosine(37) in tRNA + (sulfur carrier)-H + 5'-deoxyadenosine + L-methionine + A + S-adenosyl-L-homocysteine + 2 H(+). Functionally, catalyzes the methylthiolation of N6-(dimethylallyl)adenosine (i(6)A), leading to the formation of 2-methylthio-N6-(dimethylallyl)adenosine (ms(2)i(6)A) at position 37 in tRNAs that read codons beginning with uridine. This chain is tRNA-2-methylthio-N(6)-dimethylallyladenosine synthase, found in Dinoroseobacter shibae (strain DSM 16493 / NCIMB 14021 / DFL 12).